We begin with the raw amino-acid sequence, 311 residues long: 5'-adenylylsulfate reductase-like 3 (311 aa).

An N-terminal signal peptide occupies residues 1-22 (MATRLLCWTALLLPIIAATAAA). In terms of domain architecture, Thioredoxin spans 23–164 (SPLPEACPVP…LAAFYRDVSG (142 aa)). An N-linked (GlcNAc...) asparagine glycan is attached at asparagine 139. The chain crosses the membrane as a helical span at residues 210–230 (LALATAFVILRLLYLLFPKIG). Asparagine 281 and asparagine 305 each carry an N-linked (GlcNAc...) asparagine glycan.

It is found in the membrane. The polypeptide is 5'-adenylylsulfate reductase-like 3 (APRL3) (Oryza sativa subsp. japonica (Rice)).